The chain runs to 180 residues: Chorion protein S19 (180 aa).

The first 21 residues, 1-21, serve as a signal peptide directing secretion; it reads MNTFATLAVLFCACLIGNCHG.

This sequence belongs to the chorion protein S19 family.

The protein localises to the secreted. Chorion membrane (egg shell) protein; plays a role in protecting the egg from the environment. The protein is Chorion protein S19 (Cp19) of Drosophila subobscura (Fruit fly).